A 306-amino-acid chain; its full sequence is D-alanine--D-alanine ligase (306 aa).

Active-site residues include glutamate 18 and serine 150. Positions lysine 104–glutamate 303 constitute an ATP-grasp domain. Valine 134 to threonine 189 contributes to the ATP binding site. Mg(2+)-binding residues include aspartate 257, glutamate 270, and asparagine 272. The active site involves serine 281.

It belongs to the D-alanine--D-alanine ligase family. Requires Mg(2+) as cofactor. Mn(2+) is required as a cofactor.

Its subcellular location is the cytoplasm. It carries out the reaction 2 D-alanine + ATP = D-alanyl-D-alanine + ADP + phosphate + H(+). It functions in the pathway cell wall biogenesis; peptidoglycan biosynthesis. Its function is as follows. Cell wall formation. The protein is D-alanine--D-alanine ligase of Haemophilus influenzae (strain ATCC 51907 / DSM 11121 / KW20 / Rd).